An 867-amino-acid chain; its full sequence is Heat shock 70 kDa protein 17 (867 aa).

Positions Met-1–Ser-24 are cleaved as a signal peptide. 2 stretches are compositionally biased toward polar residues: residues Thr-560 to Glu-575 and Asp-587 to Ala-598. Disordered stretches follow at residues Thr-560 to Gly-607 and Pro-829 to Leu-867. Basic and acidic residues predominate over residues Pro-833 to Leu-867. The Prevents secretion from ER signature appears at Asp-865–Leu-867.

It belongs to the heat shock protein 70 (TC 1.A.33) family. HSP110/SSE subfamily.

It localises to the endoplasmic reticulum lumen. This chain is Heat shock 70 kDa protein 17 (HSP70-17), found in Arabidopsis thaliana (Mouse-ear cress).